Reading from the N-terminus, the 274-residue chain is Penicillin-insensitive murein endopeptidase (274 aa).

The signal sequence occupies residues 1-19 (MKKTAIALLAWFVSSASLA). Cystine bridges form between cysteine 44–cysteine 265, cysteine 187–cysteine 235, and cysteine 216–cysteine 223. 6 residues coordinate Zn(2+): histidine 110, histidine 113, aspartate 120, aspartate 147, histidine 150, and histidine 211. The interval 225–274 (DQPLPPPGDGCGAELQSWFEPPKPGTTKPEKKTPPPLPPSCQALLDEHVL) is disordered.

The protein belongs to the peptidase M74 family. Dimer. Requires Zn(2+) as cofactor.

It localises to the periplasm. In terms of biological role, murein endopeptidase that cleaves the D-alanyl-meso-2,6-diamino-pimelyl amide bond that connects peptidoglycan strands. Likely plays a role in the removal of murein from the sacculus. In Salmonella paratyphi A (strain AKU_12601), this protein is Penicillin-insensitive murein endopeptidase.